We begin with the raw amino-acid sequence, 204 residues long: Ancillary SecYEG translocon subunit (204 aa).

Over 1 to 23 (MAYSIEEEQEINQLKDWWKENGK) the chain is Cytoplasmic. A helical membrane pass occupies residues 24 to 42 (TIIVAFILGVGGMFGWRYW). Residues 43-204 (QTHQAEQIAQ…QMAKMKLNNL (162 aa)) are Periplasmic-facing.

It belongs to the YfgM family. As to quaternary structure, interacts with the SecYEG translocon. Forms a complex with PpiD.

It localises to the cell inner membrane. Its function is as follows. May mediate protein transfer from the SecYEG translocon to the periplasmic chaperone network via its periplasmic C-terminal region. The protein is Ancillary SecYEG translocon subunit of Haemophilus influenzae (strain ATCC 51907 / DSM 11121 / KW20 / Rd).